Here is a 201-residue protein sequence, read N- to C-terminus: Holliday junction branch migration complex subunit RuvA (201 aa).

The tract at residues 1–64 is domain I; that stretch reads MIGFIRGLLV…EDAHSLFGFG (64 aa). A domain II region spans residues 65 to 143; it reads TEAERGLFRS…IGVPSLAPAS (79 aa). Residues 144-153 are flexible linker; that stretch reads FAGGAAPLPA. The interval 153-201 is domain III; that stretch reads AADPADEAVSALIALGFKPQEANTLVARQAAEGRSAEDLIRAALQSAVR.

This sequence belongs to the RuvA family. In terms of assembly, homotetramer. Forms an RuvA(8)-RuvB(12)-Holliday junction (HJ) complex. HJ DNA is sandwiched between 2 RuvA tetramers; dsDNA enters through RuvA and exits via RuvB. An RuvB hexamer assembles on each DNA strand where it exits the tetramer. Each RuvB hexamer is contacted by two RuvA subunits (via domain III) on 2 adjacent RuvB subunits; this complex drives branch migration. In the full resolvosome a probable DNA-RuvA(4)-RuvB(12)-RuvC(2) complex forms which resolves the HJ.

Its subcellular location is the cytoplasm. The RuvA-RuvB-RuvC complex processes Holliday junction (HJ) DNA during genetic recombination and DNA repair, while the RuvA-RuvB complex plays an important role in the rescue of blocked DNA replication forks via replication fork reversal (RFR). RuvA specifically binds to HJ cruciform DNA, conferring on it an open structure. The RuvB hexamer acts as an ATP-dependent pump, pulling dsDNA into and through the RuvAB complex. HJ branch migration allows RuvC to scan DNA until it finds its consensus sequence, where it cleaves and resolves the cruciform DNA. This is Holliday junction branch migration complex subunit RuvA from Methylococcus capsulatus (strain ATCC 33009 / NCIMB 11132 / Bath).